A 577-amino-acid polypeptide reads, in one-letter code: Galectin-3-binding protein (577 aa).

Residues 1 to 18 form the signal peptide; it reads MALLWLLSVFLLVPGTQG. Residues 24–124 form the SRCR domain; it reads MRLVNGASAN…HEKDAGVVCS (101 aa). Cystine bridges form between Cys49-Cys113, Cys62-Cys123, and Cys93-Cys103. N-linked (GlcNAc...) asparagine glycosylation is present at Asn69. Asn125 carries N-linked (GlcNAc...) asparagine glycosylation. Residues 153 to 221 form the BTB domain; it reads CDLFIQVTGQ…FYSRRIEVSM (69 aa). Residues 260–360 enclose the BACK domain; it reads PLDLYAYARA…MLPQELFELQ (101 aa). 4 N-linked (GlcNAc...) asparagine glycosylation sites follow: Asn362, Asn398, Asn543, and Asn572.

In terms of assembly, homodimers and homomultimers. The multimers form ring-like structures with a diameter of 30-40 nm. Binds LGALS1 and LGALS3. Binds ITGB1, COL4A1, COL5A1, COL6A1, FN1 and NID. Interacts with PPIC (in vitro). The unglycosylated form interacts with PDE4DIP isoform 2/MMG8/SMYLE; this interaction may connect a pericentrosomal complex to the gamma-tubulin ring complex (gamma-TuRC) to promote microtubule assembly and acetylation. Post-translationally, N-glycosylated. As to expression, detected in embryo, liver, spleen, kidney, lung, heart, intestine, thymus and lymph node.

The protein localises to the secreted. The protein resides in the extracellular space. It localises to the extracellular matrix. Functionally, promotes integrin-mediated cell adhesion. May stimulate host defense against viruses and tumor cells. This is Galectin-3-binding protein (Lgals3bp) from Mus musculus (Mouse).